Consider the following 141-residue polypeptide: Light-regulated protein 1, chloroplastic (141 aa).

The transit peptide at 1 to 41 (MQGALFIKPTILLPLPSSVSSPKLTFLLPHATKASRLSSLR) directs the protein to the chloroplast. Low complexity predominate over residues 35–51 (SRLSSLRSNNSSSSSSL). The tract at residues 35–58 (SRLSSLRSNNSSSSSSLTSDPNTV) is disordered. The interval 58-132 (VDYNSSILSV…ACDDLGGEFC (75 aa)) is 2 X 15 AA approximate repeats. A run of 2 repeats spans residues 67 to 81 (VFPA…GYAC) and 118 to 132 (VFRE…GEFC).

Component of high molecular weight thylakoid LFNRs-containing protein complexes containing LIR1, LFNR1, LFNR2, TIC62 and TROL proteins. Interacts directly with LFNR1 and LFNR2; LIR1 increases the affinity of LFNR1 and LFNR2 for TIC62 and subsequent thylakoid relocalization. May form interchain disulfide bonds with LFNR1 and LFNR2.

It is found in the plastid. The protein localises to the chloroplast thylakoid membrane. Its subcellular location is the chloroplast envelope. The protein resides in the chloroplast stroma. In terms of biological role, thylakoid-determinant subunit of high molecular weight LFNRs-containing protein complexes. The polypeptide is Light-regulated protein 1, chloroplastic (Arabidopsis thaliana (Mouse-ear cress)).